The primary structure comprises 662 residues: Tubulin--tyrosine ligase-like protein 12 (662 aa).

In terms of domain architecture, TTL spans 324–660 (LKKRKIKVYA…LDEIDPTKVT (337 aa)). ATP is bound by residues 472–475 (CEYI), K491, and D493.

Belongs to the tubulin--tyrosine ligase family.

Regulates microtubule dynamics in uterine muscle cells. In Caenorhabditis elegans, this protein is Tubulin--tyrosine ligase-like protein 12.